A 123-amino-acid polypeptide reads, in one-letter code: MPTIQQLIRNKRQPIENRTKSPALKGCPQRRGVCTRVYTTTPKKPNSALRKIARVRLTSGFEITAYIPGIGHNLQEHSVVLVRGGRVKDLPGVRYHIIRGTLDAVGVKDRQQGRSKYGVKKSK.

The protein belongs to the universal ribosomal protein uS12 family. As to quaternary structure, part of the 30S ribosomal subunit.

The protein localises to the plastid. Its subcellular location is the chloroplast. With S4 and S5 plays an important role in translational accuracy. Located at the interface of the 30S and 50S subunits. The polypeptide is Small ribosomal subunit protein uS12c (rps12) (Marchantia polymorpha (Common liverwort)).